We begin with the raw amino-acid sequence, 697 residues long: Pentatricopeptide repeat-containing protein 1, mitochondrial (697 aa).

The transit peptide at 1 to 36 directs the protein to the mitochondrion; sequence MLKRAHYVALHVTLNHNGLSYQRVFSCLTQFPMLRH. PPR repeat units follow at residues 257–288 and 294–328; these read RPFTYRVLIESFMKFGNFEEAEKLAYSYVKNK and SDVFFSAILKFYAVGGDFQGFKKLLSFMTDYNVNF.

Its subcellular location is the mitochondrion. Its function is as follows. Mitochondrial RNA-binding protein required for the stability of the cox2 and cox3 mRNAs. The chain is Pentatricopeptide repeat-containing protein 1, mitochondrial (ppr1) from Schizosaccharomyces pombe (strain 972 / ATCC 24843) (Fission yeast).